The sequence spans 204 residues: MGNVNPKGFRLKIINTWSSIWYAEKGYKQGLHQDLSIRSYINESFKHAGVSKVIIERTIDLVSVIIHSSRPGVIIGKKGSDIEKIKQKIAEKVKNNVEVNVVGVKRSEIDAVLISNSIAQQLEKRVSFRRAMKKAIQSCLRMGARGIKVSCSGRLGGAEIARTEWYKEGRLPLHTLRANIDYAFAEAKTIYGIIGVKVWVYIGN.

Residues 37-105 (IRSYINESFK…NVEVNVVGVK (69 aa)) form the KH type-2 domain.

The protein belongs to the universal ribosomal protein uS3 family. Part of the 30S ribosomal subunit. Forms a tight complex with proteins S10 and S14.

Its function is as follows. Binds the lower part of the 30S subunit head. Binds mRNA in the 70S ribosome, positioning it for translation. The chain is Small ribosomal subunit protein uS3 from Wolbachia pipientis wMel.